A 419-amino-acid chain; its full sequence is L-rhamnose isomerase (419 aa).

The Mn(2+) site is built by His-262, Asp-294, and Asp-296.

The protein belongs to the rhamnose isomerase family. In terms of assembly, homotetramer. The cofactor is Mn(2+).

Its subcellular location is the cytoplasm. It carries out the reaction L-rhamnopyranose = L-rhamnulose. It functions in the pathway carbohydrate degradation; L-rhamnose degradation; glycerone phosphate from L-rhamnose: step 1/3. Its function is as follows. Catalyzes the interconversion of L-rhamnose and L-rhamnulose. This chain is L-rhamnose isomerase, found in Escherichia coli O6:H1 (strain CFT073 / ATCC 700928 / UPEC).